Reading from the N-terminus, the 374-residue chain is Dual-specificity RNA methyltransferase RlmN (374 aa).

E94 acts as the Proton acceptor in catalysis. Residues 100–339 (EEDRATLCVS…VTIRKTRGDD (240 aa)) form the Radical SAM core domain. An intrachain disulfide couples C107 to C344. Residues C114, C118, and C121 each contribute to the [4Fe-4S] cluster site. S-adenosyl-L-methionine contacts are provided by residues 168 to 169 (GE), S200, 222 to 224 (SLH), and N301. C344 (S-methylcysteine intermediate) is an active-site residue.

The protein belongs to the radical SAM superfamily. RlmN family. It depends on [4Fe-4S] cluster as a cofactor.

The protein resides in the cytoplasm. It catalyses the reaction adenosine(2503) in 23S rRNA + 2 reduced [2Fe-2S]-[ferredoxin] + 2 S-adenosyl-L-methionine = 2-methyladenosine(2503) in 23S rRNA + 5'-deoxyadenosine + L-methionine + 2 oxidized [2Fe-2S]-[ferredoxin] + S-adenosyl-L-homocysteine. The enzyme catalyses adenosine(37) in tRNA + 2 reduced [2Fe-2S]-[ferredoxin] + 2 S-adenosyl-L-methionine = 2-methyladenosine(37) in tRNA + 5'-deoxyadenosine + L-methionine + 2 oxidized [2Fe-2S]-[ferredoxin] + S-adenosyl-L-homocysteine. Specifically methylates position 2 of adenine 2503 in 23S rRNA and position 2 of adenine 37 in tRNAs. m2A2503 modification seems to play a crucial role in the proofreading step occurring at the peptidyl transferase center and thus would serve to optimize ribosomal fidelity. This is Dual-specificity RNA methyltransferase RlmN from Vibrio vulnificus (strain YJ016).